The sequence spans 268 residues: Tryptophan synthase alpha chain (268 aa).

Residues Glu49 and Asp60 each act as proton acceptor in the active site.

This sequence belongs to the TrpA family. In terms of assembly, tetramer of two alpha and two beta chains.

The enzyme catalyses (1S,2R)-1-C-(indol-3-yl)glycerol 3-phosphate + L-serine = D-glyceraldehyde 3-phosphate + L-tryptophan + H2O. The protein operates within amino-acid biosynthesis; L-tryptophan biosynthesis; L-tryptophan from chorismate: step 5/5. Its function is as follows. The alpha subunit is responsible for the aldol cleavage of indoleglycerol phosphate to indole and glyceraldehyde 3-phosphate. This chain is Tryptophan synthase alpha chain, found in Yersinia enterocolitica serotype O:8 / biotype 1B (strain NCTC 13174 / 8081).